Consider the following 279-residue polypeptide: Energy-coupling factor transporter ATP-binding protein EcfA1 (279 aa).

The region spanning 6 to 240 is the ABC transporter domain; sequence VRLEHVFYKY…ADAMRAIGLG (235 aa). 40–47 contacts ATP; it reads GHNGSGKS.

This sequence belongs to the ABC transporter superfamily. Energy-coupling factor EcfA family. As to quaternary structure, forms a stable energy-coupling factor (ECF) transporter complex composed of 2 membrane-embedded substrate-binding proteins (S component), 2 ATP-binding proteins (A component) and 2 transmembrane proteins (T component).

The protein resides in the cell membrane. Functionally, ATP-binding (A) component of a common energy-coupling factor (ECF) ABC-transporter complex. Unlike classic ABC transporters this ECF transporter provides the energy necessary to transport a number of different substrates. This Listeria innocua serovar 6a (strain ATCC BAA-680 / CLIP 11262) protein is Energy-coupling factor transporter ATP-binding protein EcfA1.